A 337-amino-acid chain; its full sequence is Anthranilate phosphoribosyltransferase (337 aa).

5-phospho-alpha-D-ribose 1-diphosphate contacts are provided by residues Gly-81, 84 to 85, Ser-89, 91 to 94, 109 to 117, and Ala-121; these read GD, NVST, and KHGNRALSS. Gly-81 contributes to the anthranilate binding site. Ser-93 contacts Mg(2+). Asn-112 is an anthranilate binding site. Arg-167 is an anthranilate binding site. Residues Asp-226 and Glu-227 each contribute to the Mg(2+) site.

This sequence belongs to the anthranilate phosphoribosyltransferase family. As to quaternary structure, homodimer. Mg(2+) serves as cofactor.

The catalysed reaction is N-(5-phospho-beta-D-ribosyl)anthranilate + diphosphate = 5-phospho-alpha-D-ribose 1-diphosphate + anthranilate. Its pathway is amino-acid biosynthesis; L-tryptophan biosynthesis; L-tryptophan from chorismate: step 2/5. Functionally, catalyzes the transfer of the phosphoribosyl group of 5-phosphorylribose-1-pyrophosphate (PRPP) to anthranilate to yield N-(5'-phosphoribosyl)-anthranilate (PRA). This Bradyrhizobium sp. (strain BTAi1 / ATCC BAA-1182) protein is Anthranilate phosphoribosyltransferase.